We begin with the raw amino-acid sequence, 697 residues long: PHD finger protein At1g33420 (697 aa).

Residues 603 to 653 form a PHD-type zinc finger; it reads KVDCKCGTKDDDGERMLACDGCGVWHHTRCIGINNADALPSKFLCFRCIEL.

The protein localises to the nucleus. This is PHD finger protein At1g33420 from Arabidopsis thaliana (Mouse-ear cress).